The sequence spans 443 residues: D-inositol 3-phosphate glycosyltransferase (443 aa).

Residue H30 coordinates 1D-myo-inositol 3-phosphate. UDP-N-acetyl-alpha-D-glucosamine-binding positions include 36–37 (QP) and G44. Residues 41–46 (DAGGMN), K99, Y132, T156, and R176 each bind 1D-myo-inositol 3-phosphate. 3 residues coordinate UDP-N-acetyl-alpha-D-glucosamine: R250, K255, and R316. Residues F325, R326, and C328 each contribute to the Mg(2+) site. Residues E338 and E346 each contribute to the UDP-N-acetyl-alpha-D-glucosamine site. T352 serves as a coordination point for Mg(2+).

This sequence belongs to the glycosyltransferase group 1 family. MshA subfamily. As to quaternary structure, homodimer.

The catalysed reaction is 1D-myo-inositol 3-phosphate + UDP-N-acetyl-alpha-D-glucosamine = 1D-myo-inositol 2-acetamido-2-deoxy-alpha-D-glucopyranoside 3-phosphate + UDP + H(+). Catalyzes the transfer of a N-acetyl-glucosamine moiety to 1D-myo-inositol 3-phosphate to produce 1D-myo-inositol 2-acetamido-2-deoxy-glucopyranoside 3-phosphate in the mycothiol biosynthesis pathway. This is D-inositol 3-phosphate glycosyltransferase from Stackebrandtia nassauensis (strain DSM 44728 / CIP 108903 / NRRL B-16338 / NBRC 102104 / LLR-40K-21).